A 460-amino-acid polypeptide reads, in one-letter code: Cysteine--tRNA ligase (460 aa).

C28 is a binding site for Zn(2+). The short motif at 30–40 (MTVYDYCHLGH) is the 'HIGH' region element. 3 residues coordinate Zn(2+): C209, H234, and E238. A 'KMSKS' region motif is present at residues 266–270 (KMSKS). Residue K269 coordinates ATP.

This sequence belongs to the class-I aminoacyl-tRNA synthetase family. As to quaternary structure, monomer. It depends on Zn(2+) as a cofactor.

It is found in the cytoplasm. The catalysed reaction is tRNA(Cys) + L-cysteine + ATP = L-cysteinyl-tRNA(Cys) + AMP + diphosphate. In Pseudomonas putida (strain W619), this protein is Cysteine--tRNA ligase.